A 445-amino-acid chain; its full sequence is Argininosuccinate synthase (445 aa).

ATP-binding positions include 17–25 and A43; that span reads AFSGGLDTS. Residue Y99 participates in L-citrulline binding. G129 and T131 together coordinate ATP. 3 residues coordinate L-aspartate: T131, N135, and D136. N135 contacts L-citrulline. D136 contributes to the ATP binding site. L-citrulline contacts are provided by R139 and S192. D194 lines the ATP pocket. Residues T201, E203, and E280 each contribute to the L-citrulline site.

The protein belongs to the argininosuccinate synthase family. Type 2 subfamily. As to quaternary structure, homotetramer.

It localises to the cytoplasm. It carries out the reaction L-citrulline + L-aspartate + ATP = 2-(N(omega)-L-arginino)succinate + AMP + diphosphate + H(+). It participates in amino-acid biosynthesis; L-arginine biosynthesis; L-arginine from L-ornithine and carbamoyl phosphate: step 2/3. The sequence is that of Argininosuccinate synthase from Herminiimonas arsenicoxydans.